The following is a 387-amino-acid chain: MNVFPKKIMLLGSGELGKEVAIAAKRLGCYVIACDRYNDAPAMQIADQFNVFNMNNGSELKEVIYKCNPDIIIPEIEALAVDVLKEIEQKITVIPNSRATATTMNRDKIRDLASNELNIRTAKFSYAVNQSELDLHAETIGYPLLIKPVMSSSGKGQSLVKNKNELAQAWNLAIEKSRGKSNKIILEEFIDFDLEITLLTIRQSNGKTLFCAPIGHEQKNGDYQCSWQPAELTESVLEKAQQIAKRVTDNLGGVGLFGVEFFIKGEEVIFSELSPRPHDTGLVTLISQNLNEFELHLRAVLGIPIPEIVCHEASASRVILASMETTDVAFTGLEQALSQSNTNVFMFGKPSSTEGRRMGVAVAKAETIDEARIKADNAAQSIQFINE.

N(1)-(5-phospho-beta-D-ribosyl)glycinamide contacts are provided by residues 15–16 and Glu75; that span reads EL. ATP-binding positions include Arg106, Lys147, 152-157, 187-190, and Glu195; these read SSGKGQ and EEFI. In terms of domain architecture, ATP-grasp spans 111-301; it reads DLASNELNIR…EFELHLRAVL (191 aa). Mg(2+) is bound by residues Glu260 and Glu272. Residues Asp279, Lys349, and 356–357 contribute to the N(1)-(5-phospho-beta-D-ribosyl)glycinamide site; that span reads RR.

This sequence belongs to the PurK/PurT family. In terms of assembly, homodimer.

It carries out the reaction N(1)-(5-phospho-beta-D-ribosyl)glycinamide + formate + ATP = N(2)-formyl-N(1)-(5-phospho-beta-D-ribosyl)glycinamide + ADP + phosphate + H(+). Its pathway is purine metabolism; IMP biosynthesis via de novo pathway; N(2)-formyl-N(1)-(5-phospho-D-ribosyl)glycinamide from N(1)-(5-phospho-D-ribosyl)glycinamide (formate route): step 1/1. Involved in the de novo purine biosynthesis. Catalyzes the transfer of formate to 5-phospho-ribosyl-glycinamide (GAR), producing 5-phospho-ribosyl-N-formylglycinamide (FGAR). Formate is provided by PurU via hydrolysis of 10-formyl-tetrahydrofolate. The protein is Formate-dependent phosphoribosylglycinamide formyltransferase of Prochlorococcus marinus (strain NATL1A).